The sequence spans 61 residues: Short neurotoxin 1 (61 aa).

4 cysteine pairs are disulfide-bonded: cysteine 3–cysteine 23, cysteine 17–cysteine 40, cysteine 42–cysteine 53, and cysteine 54–cysteine 59.

The protein belongs to the three-finger toxin family. Short-chain subfamily. Type I alpha-neurotoxin sub-subfamily. As to expression, expressed by the venom gland.

It is found in the secreted. Its function is as follows. Binds to muscle nicotinic acetylcholine receptor (nAChR) and inhibit acetylcholine from binding to the receptor, thereby impairing neuromuscular transmission. Functionally, produces peripheral paralysis by blocking neuromuscular transmission at the postsynaptic site. Binds to the muscular nicotinic acetylcholine receptor. The protein is Short neurotoxin 1 of Naja annulifera (Banded Egyptian cobra).